A 404-amino-acid polypeptide reads, in one-letter code: F-box only protein 12 (404 aa).

In terms of domain architecture, F-box spans 1-44 (MKNSIPIDLIYEILSRLPAKSVARCRCVSKRWRSILRHQVFTEL). A helical membrane pass occupies residues 383-403 (LAILFCLFFLLFNYLIRLCWV).

The protein localises to the membrane. This is F-box only protein 12 (FBX12) from Arabidopsis thaliana (Mouse-ear cress).